Reading from the N-terminus, the 1665-residue chain is MVGANASSISTQYYKLAHLGSISYTIYTSSDNNDQALLELELTIRHKWPQILVTYYNKSLYYFVFGHNKVDSETIDLTKEFPQLSTKYTDTVNVDQFPNPHKSTKNDDNLAWASLSFLKATKKMILYNLSLSGAIKLFGNYCVAPTGDSVYSILCIDPILFQNGDLVVSCVEKPFTQLFSSSVAYPRNLAIDTNFVIYLIPSGIRCHLFDPTSLRNNLIEKPQIENGKLLELLKITTGVQCDESTLWVKLIPNLKHLNNQTSAIGKFIHSVENKKFILWPWDLCLLQFGKFEPAIEEEGLLESSELNNPLHLISDFLDFRIAHNTQLQQQRDSLSDQQQGETVNVPLSAGSVHATGANSFGNVPDISKDVDTVGLSTTTPIETDLFNLQNTEEFFKNDSIHMNLEDQIHKKETEPENESENDMEIDDLFGGDESDDNDDLEEAGNEEEKPTPSNNTIDKNGVIGNALEEAFIADATPSKENINLDSKIMPPDSTSEEAVPDKENFKPKETKPSYIDILKDKMTIEKIVNSPDYKDPGAPLPVVPTPLVSSTVSQSAVTTNPPSVGSAPGPAPGPAPGTETLYEANNAYAQSSQISQLPQQKSAFSPILFNPIIKSDIDTKYGKGGKFYVAKDSSTNGNLDMKNRSLRATSVSGMEIPFSSEDKKRLQQNLEVLDSSTTSDNEGGEDIEDDDNDYEDEGDDDEEEEGEEEEEEESDEDEISDIGKSTPLKLNTQNESVPPQQSNYNPVNITDSGSNTTNNITDKQGYENTEGFGTPFPNQISKYSIKPESPFASNELQSSVSPMYFDTSQSHQSPQLQPSTGTLEVLKASSLESPSKISESSNYLPLILRSINVSTIPSSYLMNNLISSKLLPSFTISDDDLENDLDITKSNEMIVKLGFLKEFLDFMSPNIIFDLGLMKNDESDYYINGVNDLLLNSDPGISSDWILNSLSKVFPCTYPMKLIELLYDFKSLELEDQLDSQLNFLNEIADEEDFVGPKALYRKLKALEWDSFSLNESNKTSFEKYKNVMEKLSAENTVSDDDYFKLPMVKTRILKNGNIVNLNNIGLKFWKYLNFSPVKKQKDFQILLIAETHRNTASYATEFLDQIIQNYKECNFGTISKVNLSTVETRSDLEPISDGLVLVHKEHDQSYNDFYIQTNKKLISLVELIKLDLINKTNNFEFGKPLLLFFIDFNDSSNSNVQVCKIFRNFKVALTTHQLPLVDIFTKIVPSSLLVKKVHHETALKVFSNYKLTKISMNLYNECPNDLANKSIVKNLFTTIVKDPPSKIQFKFMNSSYRDNSSNDDIFLHLAYERSIDNSWFVASWSDPLGRVVHVKSWYCSDSVSKSEKSTYRGDIMDIMSITDDIWSISTDLFKVLNDELGSFGGKKFLVLTRINSIIPDVELVHWKRLSSKHKEISLIVVSVRQTPRIVGSNESEDLGPKSNDYAPTPMIQDKDIFFGFKQTFSTSNTSSPSASGGALVTSPNSLSLHSPQQFLNAPANFLSPQDLIAPTSSGISGAKPGSSGIDPEVVLENQDNEVYGVIPKVPLPSFNSPTRFCMKTGYLMMQVNQPSEEEYKDDIKKTYLVYEINLLSCSNYWNLDVLMKLIMSQYKQMIALNDILCMNPIVGESDILGTHSRNNAIVPWHINAVGKLLDYLVHIYVDKD.

4 disordered regions span residues 411–460, 482–512, 551–580, and 673–781; these read KETE…IDKN, INLDSKIMPPDSTSEEAVPDKENFKPKETKP, TVSQSAVTTNPPSVGSAPGPAPGPAPGTET, and LDSS…NQIS. The segment covering 415–445 has biased composition (acidic residues); that stretch reads PENESENDMEIDDLFGGDESDDNDDLEEAGN. A compositionally biased stretch (basic and acidic residues) spans 499–512; it reads VPDKENFKPKETKP. Low complexity predominate over residues 551–568; sequence TVSQSAVTTNPPSVGSAP. Positions 682-720 are enriched in acidic residues; the sequence is EGGEDIEDDDNDYEDEGDDDEEEEGEEEEEEESDEDEIS. Over residues 728–762 the composition is skewed to polar residues; that stretch reads LKLNTQNESVPPQQSNYNPVNITDSGSNTTNNITD.

It belongs to the Mediator complex subunit 13 family. In terms of assembly, component of the SRB8-11 complex, which itself associates with the Mediator complex.

It localises to the nucleus. In terms of biological role, component of the SRB8-11 complex. The SRB8-11 complex is a regulatory module of the Mediator complex which is itself involved in regulation of basal and activated RNA polymerase II-dependent transcription. The SRB8-11 complex may be involved in the transcriptional repression of a subset of genes regulated by Mediator. It may inhibit the association of the Mediator complex with RNA polymerase II to form the holoenzyme complex. This is Mediator of RNA polymerase II transcription subunit 13 (SSN2) from Candida albicans (strain SC5314 / ATCC MYA-2876) (Yeast).